The sequence spans 178 residues: Large ribosomal subunit protein eL20x (178 aa).

The protein belongs to the eukaryotic ribosomal protein eL20 family.

This chain is Large ribosomal subunit protein eL20x (RPL18AC), found in Arabidopsis thaliana (Mouse-ear cress).